A 406-amino-acid chain; its full sequence is Cysteine desulfurase (406 aa).

K226 is subject to N6-(pyridoxal phosphate)lysine. Catalysis depends on C364, which acts as the Cysteine persulfide intermediate.

This sequence belongs to the class-V pyridoxal-phosphate-dependent aminotransferase family. Csd subfamily. In terms of assembly, homodimer. Interacts with SufE and the SufBCD complex composed of SufB, SufC and SufD. The interaction with SufE is required to mediate the direct transfer of the sulfur atom from the S-sulfanylcysteine. Pyridoxal 5'-phosphate is required as a cofactor.

It localises to the cytoplasm. It carries out the reaction (sulfur carrier)-H + L-cysteine = (sulfur carrier)-SH + L-alanine. The catalysed reaction is L-selenocysteine + AH2 = hydrogenselenide + L-alanine + A + H(+). It functions in the pathway cofactor biosynthesis; iron-sulfur cluster biosynthesis. Its function is as follows. Cysteine desulfurases mobilize the sulfur from L-cysteine to yield L-alanine, an essential step in sulfur metabolism for biosynthesis of a variety of sulfur-containing biomolecules. Component of the suf operon, which is activated and required under specific conditions such as oxidative stress and iron limitation. Acts as a potent selenocysteine lyase in vitro, that mobilizes selenium from L-selenocysteine. Selenocysteine lyase activity is however unsure in vivo. This Escherichia fergusonii (strain ATCC 35469 / DSM 13698 / CCUG 18766 / IAM 14443 / JCM 21226 / LMG 7866 / NBRC 102419 / NCTC 12128 / CDC 0568-73) protein is Cysteine desulfurase.